Consider the following 329-residue polypeptide: Malate dehydrogenase (329 aa).

12-18 (GAAGQIG) is a binding site for NAD(+). Residues Arg-95 and Arg-101 each contribute to the substrate site. Residues Asn-108, Gln-115, and 132–134 (VGN) each bind NAD(+). Substrate-binding residues include Asn-134 and Arg-165. The active-site Proton acceptor is His-190.

Belongs to the LDH/MDH superfamily. MDH type 2 family.

The enzyme catalyses (S)-malate + NAD(+) = oxaloacetate + NADH + H(+). Functionally, catalyzes the reversible oxidation of malate to oxaloacetate. In Ralstonia nicotianae (strain ATCC BAA-1114 / GMI1000) (Ralstonia solanacearum), this protein is Malate dehydrogenase.